The primary structure comprises 778 residues: Endonuclease MutS2 (778 aa).

329-336 (GPNTGGKT) serves as a coordination point for ATP. The region spanning 703 to 778 (LDLRGKRYEE…GSGCTIVTFK (76 aa)) is the Smr domain.

The protein belongs to the DNA mismatch repair MutS family. MutS2 subfamily. As to quaternary structure, homodimer. Binds to stalled ribosomes, contacting rRNA.

In terms of biological role, endonuclease that is involved in the suppression of homologous recombination and thus may have a key role in the control of bacterial genetic diversity. Its function is as follows. Acts as a ribosome collision sensor, splitting the ribosome into its 2 subunits. Detects stalled/collided 70S ribosomes which it binds and splits by an ATP-hydrolysis driven conformational change. Acts upstream of the ribosome quality control system (RQC), a ribosome-associated complex that mediates the extraction of incompletely synthesized nascent chains from stalled ribosomes and their subsequent degradation. Probably generates substrates for RQC. This chain is Endonuclease MutS2, found in Streptococcus suis (strain 98HAH33).